Consider the following 207-residue polypeptide: Thiamine-phosphate synthase (207 aa).

4-amino-2-methyl-5-(diphosphooxymethyl)pyrimidine is bound by residues 35-39 (QYRDK) and asparagine 67. Mg(2+) is bound by residues aspartate 68 and aspartate 86. Threonine 105 contributes to the 4-amino-2-methyl-5-(diphosphooxymethyl)pyrimidine binding site. 132–134 (SVT) contributes to the 2-[(2R,5Z)-2-carboxy-4-methylthiazol-5(2H)-ylidene]ethyl phosphate binding site. Position 135 (lysine 135) interacts with 4-amino-2-methyl-5-(diphosphooxymethyl)pyrimidine. Residue glycine 162 coordinates 2-[(2R,5Z)-2-carboxy-4-methylthiazol-5(2H)-ylidene]ethyl phosphate.

Belongs to the thiamine-phosphate synthase family. Requires Mg(2+) as cofactor.

The catalysed reaction is 2-[(2R,5Z)-2-carboxy-4-methylthiazol-5(2H)-ylidene]ethyl phosphate + 4-amino-2-methyl-5-(diphosphooxymethyl)pyrimidine + 2 H(+) = thiamine phosphate + CO2 + diphosphate. It catalyses the reaction 2-(2-carboxy-4-methylthiazol-5-yl)ethyl phosphate + 4-amino-2-methyl-5-(diphosphooxymethyl)pyrimidine + 2 H(+) = thiamine phosphate + CO2 + diphosphate. It carries out the reaction 4-methyl-5-(2-phosphooxyethyl)-thiazole + 4-amino-2-methyl-5-(diphosphooxymethyl)pyrimidine + H(+) = thiamine phosphate + diphosphate. It functions in the pathway cofactor biosynthesis; thiamine diphosphate biosynthesis; thiamine phosphate from 4-amino-2-methyl-5-diphosphomethylpyrimidine and 4-methyl-5-(2-phosphoethyl)-thiazole: step 1/1. Condenses 4-methyl-5-(beta-hydroxyethyl)thiazole monophosphate (THZ-P) and 2-methyl-4-amino-5-hydroxymethyl pyrimidine pyrophosphate (HMP-PP) to form thiamine monophosphate (TMP). The chain is Thiamine-phosphate synthase from Pseudomonas putida (strain W619).